A 1211-amino-acid polypeptide reads, in one-letter code: A disintegrin and metalloproteinase with thrombospondin motifs 2 (1211 aa).

The first 29 residues, 1–29 (MDPPAGAARRLLCPALLLLLLLLPPPLLP), serve as a signal peptide directing secretion. Residues 30 to 253 (PPPPPANARL…GVLEEHANSS (224 aa)) constitute a propeptide that is removed on maturation. N-linked (GlcNAc...) asparagine glycosylation is found at asparagine 112 and asparagine 251. In terms of domain architecture, Peptidase M12B spans 266–470 (YNIEVLLGVD…HSYDCLLDDP (205 aa)). Intrachain disulfides connect cysteine 343–cysteine 392, cysteine 386–cysteine 465, cysteine 425–cysteine 451, cysteine 492–cysteine 517, cysteine 503–cysteine 526, cysteine 512–cysteine 545, cysteine 539–cysteine 550, cysteine 573–cysteine 610, cysteine 577–cysteine 615, and cysteine 588–cysteine 600. Histidine 408 contributes to the Zn(2+) binding site. Glutamate 409 is a catalytic residue. Residues histidine 412 and histidine 418 each coordinate Zn(2+). Residues 480-560 (QLPGLHYSMN…IWLTPDILKR (81 aa)) form the Disintegrin domain. The TSP type-1 1 domain occupies 561 to 616 (DGSWGAWSPFGSCSRTCGTGVKFRTRQCDNPHPANGGRTCSGLAYDFQLCSRQDCP). Residues 691–693 (RGD) carry the Cell attachment site motif. Residues 723-851 (KVVKGTFTRS…NVDDNNVLEE (129 aa)) form a spacer region. TSP type-1 domains are found at residues 854-912 (VVYE…NPQE), 914-971 (SQPV…RACS), and 975-1029 (CPGR…GPCP). Residues asparagine 949 and asparagine 993 are each glycosylated (N-linked (GlcNAc...) asparagine). 3 cysteine pairs are disulfide-bonded: cysteine 987–cysteine 1023, cysteine 991–cysteine 1028, and cysteine 1002–cysteine 1012. A glycan (N-linked (GlcNAc...) asparagine) is linked at asparagine 1031. The region spanning 1059–1097 (SKGHCQGDKSIFCRMEVLSRYCSIPGYNKLCCKSCNLYN) is the PLAC domain. 3 N-linked (GlcNAc...) asparagine glycosylation sites follow: asparagine 1098, asparagine 1145, and asparagine 1150. A disordered region spans residues 1170–1191 (LEDEVQPPNLIPRRPSPYEKTR).

As to quaternary structure, may belong to a multimeric complex. Binds specifically to collagen type XIV. The cofactor is Zn(2+). The precursor is cleaved by a furin endopeptidase. In terms of processing, glycosylated. Can be O-fucosylated by POFUT2 on a serine or a threonine residue found within the consensus sequence C1-X(2)-(S/T)-C2-G of the TSP type-1 repeat domains where C1 and C2 are the first and second cysteine residue of the repeat, respectively. Fucosylated repeats can then be further glycosylated by the addition of a beta-1,3-glucose residue by the glucosyltransferase, B3GALTL. Fucosylation mediates the efficient secretion of ADAMTS family members. Can also be C-glycosylated with one or two mannose molecules on tryptophan residues within the consensus sequence W-X-X-W of the TPRs, and N-glycosylated. These other glycosylations can also facilitate secretion. Expressed at high level in skin, bone, tendon and aorta and at low levels in thymus and brain.

The protein resides in the secreted. It localises to the extracellular space. Its subcellular location is the extracellular matrix. The enzyme catalyses Cleaves the N-propeptide of collagen chain alpha1(I) at Pro-|-Gln and of alpha1(II) and alpha2(I) at Ala-|-Gln.. In terms of biological role, cleaves the propeptides of type I and II collagen prior to fibril assembly. Does not act on type III collagen. Cleaves lysyl oxidase LOX at a site downstream of its propeptide cleavage site to produce a short LOX form with reduced collagen-binding activity. This chain is A disintegrin and metalloproteinase with thrombospondin motifs 2 (ADAMTS2), found in Homo sapiens (Human).